The following is an 875-amino-acid chain: Neurotrypsin (875 aa).

An N-terminal signal peptide occupies residues 1–20; the sequence is MTLARFVLALMLGALPEVVG. Asparagine 26 carries an N-linked (GlcNAc...) asparagine glycan. The interval 29-88 is disordered; sequence LHHSHRHSPPAGPHYPYYLPTQQRPPRTRPPPPLPRFPRPPRALPAQRPHALQAGHTPRP. Residues 56 to 71 are compositionally biased toward pro residues; that stretch reads TRPPPPLPRFPRPPRA. The Kringle domain maps to 93-165; it reads CPAGEPWVSV…GKVDWGYCDC (73 aa). Cystine bridges form between cysteine 93-cysteine 165, cysteine 109-cysteine 149, cysteine 138-cysteine 163, cysteine 195-cysteine 259, cysteine 208-cysteine 269, cysteine 239-cysteine 249, cysteine 305-cysteine 369, cysteine 318-cysteine 379, cysteine 349-cysteine 359, cysteine 412-cysteine 475, cysteine 425-cysteine 485, cysteine 455-cysteine 465, cysteine 525-cysteine 589, cysteine 538-cysteine 599, cysteine 569-cysteine 579, cysteine 619-cysteine 750, cysteine 661-cysteine 677, cysteine 765-cysteine 831, cysteine 794-cysteine 808, and cysteine 821-cysteine 850. SRCR domains follow at residues 170-271, 280-381, 387-487, and 500-601; these read VRLR…TCSF, IRLA…SCTP, IRLA…ACYP, and VRLM…ICDY. Positions 619-630 are zymogen activation region; that stretch reads CGLRLLHRRQKR. The 244-residue stretch at 631–874 folds into the Peptidase S1 domain; it reads IIGGKNSLRG…FVPWIKSVTK (244 aa). Histidine 676 (charge relay system) is an active-site residue. Asparagine 683 carries N-linked (GlcNAc...) asparagine glycosylation. Aspartate 726 functions as the Charge relay system in the catalytic mechanism. Serine 825 acts as the Charge relay system in catalysis.

This sequence belongs to the peptidase S1 family. Brain and Leydig cells of the testis.

It is found in the secreted. In terms of biological role, plays a role in neuronal plasticity and the proteolytic action may subserve structural reorganizations associated with learning and memory operations. This Homo sapiens (Human) protein is Neurotrypsin (PRSS12).